The sequence spans 290 residues: Nucleoid occlusion protein (290 aa).

Positions 153 to 172 (EALAQRLGKGQSTIANKLRL) form a DNA-binding region, H-T-H motif.

Belongs to the ParB family.

The protein localises to the cytoplasm. It localises to the nucleoid. Effects nucleoid occlusion by binding relatively nonspecifically to DNA and preventing the assembly of the division machinery in the vicinity of the nucleoid, especially under conditions that disturb the cell cycle. It helps to coordinate cell division and chromosome segregation by preventing the formation of the Z ring through the nucleoid, which would cause chromosome breakage. This chain is Nucleoid occlusion protein, found in Bacillus anthracis (strain A0248).